The primary structure comprises 295 residues: Ankyrin repeat and SOCS box protein 17 (295 aa).

An ANK repeat occupies 146-176 (SGITPLLYVAQTRQSNILKILLQYGILEREN). The SOCS box domain occupies 232 to 295 (LGRRPIISNW…CLQNYLNLES (64 aa)).

This sequence belongs to the ankyrin SOCS box (ASB) family.

The protein operates within protein modification; protein ubiquitination. Functionally, may be a substrate-recognition component of a SCF-like ECS (Elongin-Cullin-SOCS-box protein) E3 ubiquitin-protein ligase complex which mediates the ubiquitination and subsequent proteasomal degradation of target proteins. The polypeptide is Ankyrin repeat and SOCS box protein 17 (ASB17) (Bos taurus (Bovine)).